A 708-amino-acid chain; its full sequence is Nucleolar protein 11-like (708 aa).

The protein resides in the nucleus. Its subcellular location is the nucleolus. Functionally, ribosome biogenesis factor. May be required for both optimal rDNA transcription and pre-rRNA processing. This chain is Nucleolar protein 11-like (nol11), found in Danio rerio (Zebrafish).